Consider the following 1042-residue polypeptide: SWI/SNF-related matrix-associated actin-dependent regulator of chromatin subfamily A member 1 (1042 aa).

The interval 25-82 (EDEQPGPSTSQEEGAAAAATEATAATEKGEKKKEKNVSSFQLKLAAKAPKSEKEMDPE) is disordered. Low complexity predominate over residues 36 to 50 (EEGAAAAATEATAAT). Composition is skewed to basic and acidic residues over residues 51–60 (EKGEKKKEKN) and 73–82 (PKSEKEMDPE). A phosphoserine mark is found at S116 and S119. Residues 195–360 (ISLYENGVNG…WALLNFLLPD (166 aa)) enclose the Helicase ATP-binding domain. 208–215 (DEMGLGKT) lines the ATP pocket. A DEAH box motif is present at residues 311–314 (DEAH). Positions 490 to 641 (VLDKLLAKLK…SIVIQQGRLI (152 aa)) constitute a Helicase C-terminal domain. Glycyl lysine isopeptide (Lys-Gly) (interchain with G-Cter in SUMO2) cross-links involve residues K650, K716, and K738. Residues 819 to 849 (EQKKIDGAEPLTPEETEEKEKLLTQGFTNWT) are disordered. Positions 828–837 (PLTPEETEEK) are enriched in basic and acidic residues. Residues 843-895 (QGFTNWTKRDFNQFIKANEKYGRDDIDNIAREVEGKSPEEVMEYSAVFWERCN) form the SANT 1 domain. The residue at position 942 (Y942) is a Phosphotyrosine. The SANT 2 domain maps to 946–1010 (KGKNYTEEED…QRRCNTLISL (65 aa)).

Belongs to the SNF2/RAD54 helicase family. ISWI subfamily. As to quaternary structure, may form homodimers. Component of the ACF-1 ISWI chromatin remodeling complex at least composed of SMARCA1 and BAZ1A, which regulates the spacing of histone octamers on the DNA template to facilitate access to DNA. Within the complex interacts with BAZ1A; the interaction is direct. Component of the WICH-1 ISWI chromatin remodeling complex at least composed of SMARCA1 and BAZ1B/WSTF. Within the complex interacts with BAZ1B/WSTF. Component of the NoRC-1 ISWI chromatin remodeling complex at least composed of SMARCA1 and BAZ2A/TIP5. Within the complex interacts with BAZ2A/TIP5. Component of the BRF-1 ISWI chromatin remodeling complex at least composed of SMARCA1 and BAZ2B. Within the complex interacts with BAZ2B. Component of the NURF-1 ISWI chromatin remodeling complex (also called the nucleosome-remodeling factor (NURF) complex) at least composed of SMARCA1, BPTF, RBBP4 and RBBP7. Within the complex interacts with BPTF. Within the complex interacts with RBBP4 and RBBP7. Component of the CERF-1 ISWI chromatin remodeling complex (also called the CECR2-containing-remodeling factor (CERF) complex) at least composed of CECR2 and SMARCA1. LUZP1 is detected as part of the CERF-1 complex in embryonic stem cells where it is involved in complex stabilization but is not detected in the complex in the testis. Component of the RSF-1 ISWI chromatin remodeling complex at least composed of SMARCA1 and RSF1. Within the complex interacts with RSF1. Interacts with PRLR. Interacts with ERCC6. In terms of assembly, may form homodimers. Component of the BPFT-SMARCA1 complex at least composed of SMARCA1, BPFT, RBBP4 and RBBP7; the complex is catalytically inactive and does not remodel chromatin. Within the complex interacts with BPTF, RBBP4 and RBBP7. Component of the BAZ1A-1-SMARCA1 complex at least composed of SMARCA1 and BAZ1A; the complex is catalytically inactive and does not remodel chromatin. Component of the BAZ1B-1-SMARCA1 complex at least composed of SMARCA1 and BAZ1B; the complex is catalytically inactive and does not remodel chromatin. In terms of tissue distribution, expressed in lung, breast, kidney, ovary, skeletal muscle and brain. Mainly expressed in non-neuronal tissues such as lung, breast, kidney, and ovary.

The protein resides in the nucleus. The protein localises to the chromosome. The enzyme catalyses ATP + H2O = ADP + phosphate + H(+). In terms of biological role, ATPase that possesses intrinsic ATP-dependent chromatin-remodeling activity. ATPase activity is substrate-dependent, and is increased when nucleosomes are the substrate, but is also catalytically active when DNA alone is the substrate. Catalytic subunit of ISWI chromatin-remodeling complexes, which form ordered nucleosome arrays on chromatin and facilitate access to DNA during DNA-templated processes such as DNA replication, transcription, and repair. Within the ISWI chromatin-remodeling complexes, slides edge- and center-positioned histone octamers away from their original location on the DNA template. Catalytic activity and histone octamer sliding propensity is regulated and determined by components of the ISWI chromatin-remodeling complexes. The BAZ1A-, BAZ1B-, BAZ2A- and BAZ2B-containing ISWI chromatin-remodeling complexes regulate the spacing of nucleosomes along the chromatin and have the ability to slide mononucleosomes to the center of a DNA template. The CECR2- and RSF1-containing ISWI chromatin-remodeling complexes do not have the ability to slide mononucleosomes to the center of a DNA template. Within the NURF-1 and CERF-1 ISWI chromatin remodeling complexes, nucleosomes are the preferred substrate for its ATPase activity. Within the NURF-1 ISWI chromatin-remodeling complex, binds to the promoters of En1 and En2 to positively regulate their expression and promote brain development. May promote neurite outgrowth. May be involved in the development of luteal cells. Facilitates nucleosome assembly during DNA replication, ensuring replication fork progression and genomic stability by preventing replication stress and nascent DNA gaps. Catalytically inactive when either DNA or nucleosomes are the substrate and does not possess chromatin-remodeling activity. Acts as a negative regulator of chromatin remodelers by generating inactive complexes. This Homo sapiens (Human) protein is SWI/SNF-related matrix-associated actin-dependent regulator of chromatin subfamily A member 1.